Here is a 1066-residue protein sequence, read N- to C-terminus: Thyrotropin-releasing hormone-degrading ectoenzyme (1066 aa).

The span at 1 to 14 (MALDGERGEQEEEK) shows a compositional bias: basic and acidic residues. Positions 1–43 (MALDGERGEQEEEKKKKKKKKKRKKKEEEGAEKSSSPFAATMG) are disordered. Topologically, residues 1 to 81 (MALDGERGEQ…ERHIAVHKRL (81 aa)) are cytoplasmic. The segment covering 15-25 (KKKKKKKKRKK) has biased composition (basic residues). Residue Thr71 is modified to Phosphothreonine; by PKC. Residues 82-102 (VLAFAVSIVALLAVTMLAVLL) form a helical; Signal-anchor for type II membrane protein membrane-spanning segment. Residues 103 to 1066 (SLRFDECGAS…FQWLGKAMRH (964 aa)) lie on the Extracellular side of the membrane. The disordered stretch occupies residues 118-176 (TDGGLGGFPERDSNSSFPGSARRNHHAGGESSQRESGEVGTPGTPSAQPPSEEEREQWQ). N-linked (GlcNAc...) asparagine glycans are attached at residues Asn131, Asn202, Asn217, Asn264, and Asn380. 446–450 (AAMEN) is a substrate binding site. His482 is a binding site for Zn(2+). Glu483 acts as the Proton acceptor in catalysis. Zn(2+)-binding residues include His486 and Glu505. 7 N-linked (GlcNAc...) asparagine glycosylation sites follow: Asn647, Asn676, Asn691, Asn705, Asn726, Asn842, and Asn948.

The protein belongs to the peptidase M1 family. As to quaternary structure, homodimer; disulfide-linked. Zn(2+) serves as cofactor.

The protein localises to the membrane. The catalysed reaction is Release of the N-terminal pyroglutamyl group from pGlu-|-His-Xaa tripeptides and pGlu-|-His-Xaa-Gly tetrapeptides.. Functionally, specific inactivation of TRH after its release. This chain is Thyrotropin-releasing hormone-degrading ectoenzyme (Trhde), found in Mus musculus (Mouse).